We begin with the raw amino-acid sequence, 199 residues long: Probable DNA-directed RNA polymerase subunit delta (199 aa).

Residues L14–W81 form the HTH HARE-type domain. Acidic residues-rich tracts occupy residues G116 to D147, A157 to L171, and L182 to K199. Residues G116–K199 form a disordered region.

The protein belongs to the RpoE family. RNAP is composed of a core of 2 alpha, a beta and a beta' subunits. The core is associated with a delta subunit and one of several sigma factors.

Its function is as follows. Participates in both the initiation and recycling phases of transcription. In the presence of the delta subunit, RNAP displays an increased specificity of transcription, a decreased affinity for nucleic acids, and an increased efficiency of RNA synthesis because of enhanced recycling. The polypeptide is Probable DNA-directed RNA polymerase subunit delta (Lactiplantibacillus plantarum (strain ATCC BAA-793 / NCIMB 8826 / WCFS1) (Lactobacillus plantarum)).